A 466-amino-acid chain; its full sequence is Ribulose bisphosphate carboxylase large chain (466 aa).

Lys-5 is modified (N6,N6,N6-trimethyllysine). Positions 114 and 164 each coordinate substrate. Lys-166 serves as the catalytic Proton acceptor. A substrate-binding site is contributed by Lys-168. Residues Lys-192, Asp-194, and Glu-195 each coordinate Mg(2+). Position 192 is an N6-carboxylysine (Lys-192). His-285 serves as the catalytic Proton acceptor. Substrate is bound by residues Arg-286, His-318, and Ser-370.

It belongs to the RuBisCO large chain family. Type I subfamily. Heterohexadecamer of 8 large chains and 8 small chains; disulfide-linked. The disulfide link is formed within the large subunit homodimers. The cofactor is Mg(2+). In terms of processing, the disulfide bond which can form in the large chain dimeric partners within the hexadecamer appears to be associated with oxidative stress and protein turnover.

The protein localises to the plastid. Its subcellular location is the chloroplast. It catalyses the reaction 2 (2R)-3-phosphoglycerate + 2 H(+) = D-ribulose 1,5-bisphosphate + CO2 + H2O. It carries out the reaction D-ribulose 1,5-bisphosphate + O2 = 2-phosphoglycolate + (2R)-3-phosphoglycerate + 2 H(+). RuBisCO catalyzes two reactions: the carboxylation of D-ribulose 1,5-bisphosphate, the primary event in carbon dioxide fixation, as well as the oxidative fragmentation of the pentose substrate in the photorespiration process. Both reactions occur simultaneously and in competition at the same active site. The protein is Ribulose bisphosphate carboxylase large chain of Asarum canadense (Wild ginger).